The following is a 155-amino-acid chain: 6,7-dimethyl-8-ribityllumazine synthase (155 aa).

Residues Phe23, 57–59 (AFE), and 80–82 (AVI) contribute to the 5-amino-6-(D-ribitylamino)uracil site. 85-86 (AT) contributes to the (2S)-2-hydroxy-3-oxobutyl phosphate binding site. His88 acts as the Proton donor in catalysis. Residue Tyr113 coordinates 5-amino-6-(D-ribitylamino)uracil. Arg127 contacts (2S)-2-hydroxy-3-oxobutyl phosphate.

The protein belongs to the DMRL synthase family.

It carries out the reaction (2S)-2-hydroxy-3-oxobutyl phosphate + 5-amino-6-(D-ribitylamino)uracil = 6,7-dimethyl-8-(1-D-ribityl)lumazine + phosphate + 2 H2O + H(+). It participates in cofactor biosynthesis; riboflavin biosynthesis; riboflavin from 2-hydroxy-3-oxobutyl phosphate and 5-amino-6-(D-ribitylamino)uracil: step 1/2. In terms of biological role, catalyzes the formation of 6,7-dimethyl-8-ribityllumazine by condensation of 5-amino-6-(D-ribitylamino)uracil with 3,4-dihydroxy-2-butanone 4-phosphate. This is the penultimate step in the biosynthesis of riboflavin. This is 6,7-dimethyl-8-ribityllumazine synthase from Moorella thermoacetica (strain ATCC 39073 / JCM 9320).